The following is a 331-amino-acid chain: Glutaminase (331 aa).

Substrate contacts are provided by Ser77, Asn129, Glu173, Asn180, Tyr204, Tyr256, and Val274.

Belongs to the glutaminase family. In terms of assembly, homotetramer.

It catalyses the reaction L-glutamine + H2O = L-glutamate + NH4(+). The polypeptide is Glutaminase (Oceanobacillus iheyensis (strain DSM 14371 / CIP 107618 / JCM 11309 / KCTC 3954 / HTE831)).